The following is a 289-amino-acid chain: 4-hydroxy-tetrahydrodipicolinate synthase (289 aa).

T44 is a pyruvate binding site. Y132 (proton donor/acceptor) is an active-site residue. The active-site Schiff-base intermediate with substrate is the K161. A pyruvate-binding site is contributed by I201.

The protein belongs to the DapA family. Homotetramer; dimer of dimers.

Its subcellular location is the cytoplasm. It catalyses the reaction L-aspartate 4-semialdehyde + pyruvate = (2S,4S)-4-hydroxy-2,3,4,5-tetrahydrodipicolinate + H2O + H(+). It participates in amino-acid biosynthesis; L-lysine biosynthesis via DAP pathway; (S)-tetrahydrodipicolinate from L-aspartate: step 3/4. Its function is as follows. Catalyzes the condensation of (S)-aspartate-beta-semialdehyde [(S)-ASA] and pyruvate to 4-hydroxy-tetrahydrodipicolinate (HTPA). The sequence is that of 4-hydroxy-tetrahydrodipicolinate synthase from Methanocaldococcus jannaschii (strain ATCC 43067 / DSM 2661 / JAL-1 / JCM 10045 / NBRC 100440) (Methanococcus jannaschii).